Reading from the N-terminus, the 883-residue chain is Glutamate receptor 2 (883 aa).

An N-terminal signal peptide occupies residues 1 to 24; it reads MQKIMHISVLLSPVLWGLIFGVSS. Over 25 to 543 the chain is Extracellular; that stretch reads NSIQIGGLFP…GVFSFLDPLA (519 aa). A disulfide bridge connects residues Cys-78 and Cys-330. Residues Asn-256, Asn-370, Asn-406, and Asn-413 are each glycosylated (N-linked (GlcNAc...) asparagine). L-glutamate-binding residues include Pro-499, Thr-501, and Arg-506. Residues 544–564 traverse the membrane as a helical segment; it reads YEIWMCIVFAYIGVSVVLFLV. Residues 565 to 591 lie on the Cytoplasmic side of the membrane; sequence SRFSPYEWHTEEFEDGRETQSSESTNE. Positions 592 to 607 form an intramembrane region, helical; Pore-forming; that stretch reads FGIFNSLWFSLGAFMQ. An intramembrane segment occupies 608–610; the sequence is QGC. The S-palmitoyl cysteine moiety is linked to residue Cys-610. The Cytoplasmic segment spans residues 611 to 616; sequence DISPRS. The chain crosses the membrane as a helical span at residues 617 to 637; that stretch reads LSGRIVGGVWWFFTLIIISSY. At 638 to 812 the chain is on the extracellular side; it reads TANLAAFLTV…EKTSALSLSN (175 aa). L-glutamate-binding residues include Ser-675 and Thr-676. Ser-683 bears the Phosphoserine; by PKC mark. Residue Ser-717 is modified to Phosphoserine; by PKG. Glu-726 contributes to the L-glutamate binding site. A disulfide bridge connects residues Cys-739 and Cys-794. The helical transmembrane segment at 813 to 833 threads the bilayer; it reads VAGVFYILVGGLGLAMLVALI. Residues 834 to 883 lie on the Cytoplasmic side of the membrane; sequence EFCYKSRAEAKRMKVAKNAQNINPSSSQNSQNFATYKEGYNVYGIESVKI. Cys-836 carries S-palmitoyl cysteine lipidation. 2 positions are modified to phosphoserine: Ser-860 and Ser-863. Positions 867–877 are required for interaction with IQSEC1; it reads ATYKEGYNVYG. A Phosphotyrosine modification is found at Tyr-876. Ser-880 carries the phosphoserine modification.

The protein belongs to the glutamate-gated ion channel (TC 1.A.10.1) family. GRIA2 subfamily. In terms of assembly, homotetramer or heterotetramer of pore-forming glutamate receptor subunits. Tetramers may be formed by the dimerization of dimers. May interact with MPP4. Forms a ternary complex with GRIP1 and CSPG4. Interacts with ATAD1 in an ATP-dependent manner. ATAD1-catalyzed ATP hydrolysis disrupts binding to ATAD1 and to GRIP1 and leads to AMPAR complex disassembly. Interacts with GRIP1 and GRIP2. Interacts with NSF via its C-terminus. Isoform 1, but not isoform 3, interacts with PICK1. Interacts with CACNG2. Interacts with GRIA1 and SYNDIG1. Part of a complex containing GRIA2, NSF and NAPA and/or NAPB. Interacts with SNX27 (via PDZ domain); the interaction is required for recycling to the plasma membrane when endocytosed and prevent degradation in lysosomes. Interacts with LRFN1. Found in a complex with GRIA1, GRIA3, GRIA4, CNIH2, CNIH3, CACNG2, CACNG3, CACNG4, CACNG5, CACNG7 and CACNG8. Interacts with CACNG5. Interacts with OLFM2. Interacts with AP4B1, AP4E1 and AP4M1; probably indirect it mediates the somatodendritic localization of GRIA2 in neurons. Forms a complex with GRIP1, NSG1 and STX12; controls the intracellular fate of AMPAR and the endosomal sorting of the GRIA2 subunit toward recycling and membrane targeting. Interacts with IQSEC1; the interaction is required for ARF6 activation. Interacts (heterotetramer form) with CNIH2 and CNIH3; this interaction promotes expression at the plasma membrane and extensively modulates their gating properties by slowing deactivation and desensitization kinetics. Post-translationally, palmitoylated. Depalmitoylated upon L-glutamate stimulation. ZDHHC3/GODZ specifically palmitoylates Cys-610, which leads to Golgi retention and decreased cell surface expression. In contrast, Cys-836 palmitoylation does not affect cell surface expression but regulates stimulation-dependent endocytosis. N-glycosylated. In terms of processing, ubiquitinated by RNF167, leading to its degradation. Post-translationally, phosphorylation at Tyr-876 is required for interaction with IQSEC1 and ARF6 activation, which in turn triggers AMPAR internalization for persistent synaptic depression. In terms of tissue distribution, detected in brain cortex, hippocampus and cerebellum (at protein level). Detected in hippocampus.

Its subcellular location is the cell membrane. It localises to the postsynaptic cell membrane. It is found in the postsynaptic density membrane. It carries out the reaction Ca(2+)(in) = Ca(2+)(out). The catalysed reaction is Na(+)(in) = Na(+)(out). Its function is as follows. Ionotropic glutamate receptor that functions as a ligand-gated cation channel, gated by L-glutamate and glutamatergic agonists such as alpha-amino-3-hydroxy-5-methyl-4-isoxazolepropionic acid (AMPA), quisqualic acid, and kainic acid. L-glutamate acts as an excitatory neurotransmitter at many synapses in the central nervous system and plays an important role in fast excitatory synaptic transmission. Binding of the excitatory neurotransmitter L-glutamate induces a conformation change, leading to the opening of the cation channel, and thereby converts the chemical signal to an electrical impulse upon entry of monovalent and divalent cations such as sodium and calcium. The receptor then desensitizes rapidly and enters in a transient inactive state, characterized by the presence of bound agonist. In the presence of CACNG4 or CACNG7 or CACNG8, shows resensitization which is characterized by a delayed accumulation of current flux upon continued application of L-glutamate. Through complex formation with NSG1, GRIP1 and STX12 controls the intracellular fate of AMPAR and the endosomal sorting of the GRIA2 subunit toward recycling and membrane targeting. The sequence is that of Glutamate receptor 2 from Mus musculus (Mouse).